Reading from the N-terminus, the 431-residue chain is Adenylosuccinate synthetase (431 aa).

GTP contacts are provided by residues 12–18 and 40–42; these read GDEGKGK and GHT. D13 (proton acceptor) is an active-site residue. D13 and G40 together coordinate Mg(2+). IMP-binding positions include 13 to 16, 38 to 41, T129, R143, Q224, T239, and R303; these read DEGK and NAGH. The active-site Proton donor is H41. 299-305 serves as a coordination point for substrate; that stretch reads TVSNRQR. GTP contacts are provided by residues R305, 331–333, and 413–415; these read KLD and STG.

The protein belongs to the adenylosuccinate synthetase family. In terms of assembly, homodimer. The cofactor is Mg(2+).

It localises to the cytoplasm. It catalyses the reaction IMP + L-aspartate + GTP = N(6)-(1,2-dicarboxyethyl)-AMP + GDP + phosphate + 2 H(+). It participates in purine metabolism; AMP biosynthesis via de novo pathway; AMP from IMP: step 1/2. Plays an important role in the de novo pathway of purine nucleotide biosynthesis. Catalyzes the first committed step in the biosynthesis of AMP from IMP. This chain is Adenylosuccinate synthetase, found in Ehrlichia canis (strain Jake).